The following is a 1009-amino-acid chain: Protein translocase subunit SecA (1009 aa).

ATP is bound by residues Gln-86, 104-108 (GEGKT), and Asp-497. 2 disordered regions span residues 869 to 894 (AVPQ…GQQP) and 949 to 1009 (ERRP…RNAG). Composition is skewed to low complexity over residues 883–894 (PVPAATAPGQQP) and 953–973 (SGAA…AGAG). Zn(2+)-binding residues include Cys-990, Cys-992, Cys-1001, and His-1002.

This sequence belongs to the SecA family. In terms of assembly, monomer and homodimer. Part of the essential Sec protein translocation apparatus which comprises SecA, SecYEG and auxiliary proteins SecDF. Other proteins may also be involved. Zn(2+) is required as a cofactor.

Its subcellular location is the cell membrane. It localises to the cytoplasm. The catalysed reaction is ATP + H2O + cellular proteinSide 1 = ADP + phosphate + cellular proteinSide 2.. In terms of biological role, part of the Sec protein translocase complex. Interacts with the SecYEG preprotein conducting channel. Has a central role in coupling the hydrolysis of ATP to the transfer of proteins into and across the cell membrane, serving as an ATP-driven molecular motor driving the stepwise translocation of polypeptide chains across the membrane. The polypeptide is Protein translocase subunit SecA (Acidothermus cellulolyticus (strain ATCC 43068 / DSM 8971 / 11B)).